Consider the following 589-residue polypeptide: Inactive poly [ADP-ribose] polymerase RCD1 (589 aa).

Residues lysine 64–tryptophan 153 enclose the WWE domain. Residues glutamate 248–valine 469 enclose the PARP catalytic domain. 2 disordered regions span residues arginine 464–lysine 504 and glutamine 569–leucine 589. Over residues leucine 481–proline 503 the composition is skewed to polar residues. The RST domain maps to threonine 501–serine 572. The segment covering lysine 571–leucine 589 has biased composition (basic and acidic residues).

In terms of assembly, interacts with the transcription factors NAC013/NTL1 and NAC046. Interacts with dehydration-responsive DREB2 proteins and a number of transcription factors belonging to several protein families. Interacts with turnip crinkle virus (TCV) movement protein P8. Expressed in young developing tissues, such as young leaves and flowers and root tips. In mature plants, expressed in vasculature of leaves and roots, and guard cells.

The protein resides in the nucleus matrix. Inactive ADP-ribosyltransferase that functions with SRO1 to regulate oxidative stress, hormonal and developmental responses. Required for embryogenesis, vegetative and reproductive development, and abiotic stress responses. May regulate several stress-responsive genes. Seems to play a larger developmental role than SRO1. Does not bind NAD in vitro. This chain is Inactive poly [ADP-ribose] polymerase RCD1 (RCD1), found in Arabidopsis thaliana (Mouse-ear cress).